The primary structure comprises 186 residues: Ribosome-recycling factor (186 aa).

It belongs to the RRF family.

It localises to the cytoplasm. Its function is as follows. Responsible for the release of ribosomes from messenger RNA at the termination of protein biosynthesis. May increase the efficiency of translation by recycling ribosomes from one round of translation to another. The chain is Ribosome-recycling factor from Burkholderia mallei (strain NCTC 10247).